Here is a 451-residue protein sequence, read N- to C-terminus: UDP-N-acetylmuramoylalanine--D-glutamate ligase (451 aa).

119-125 (GSNGKTT) lines the ATP pocket.

This sequence belongs to the MurCDEF family.

It is found in the cytoplasm. The catalysed reaction is UDP-N-acetyl-alpha-D-muramoyl-L-alanine + D-glutamate + ATP = UDP-N-acetyl-alpha-D-muramoyl-L-alanyl-D-glutamate + ADP + phosphate + H(+). It functions in the pathway cell wall biogenesis; peptidoglycan biosynthesis. In terms of biological role, cell wall formation. Catalyzes the addition of glutamate to the nucleotide precursor UDP-N-acetylmuramoyl-L-alanine (UMA). This is UDP-N-acetylmuramoylalanine--D-glutamate ligase from Streptococcus mutans serotype c (strain ATCC 700610 / UA159).